We begin with the raw amino-acid sequence, 390 residues long: Ribonuclease D (390 aa).

The 3'-5' exonuclease domain maps to 7–173; the sequence is ITDSATLAAL…TLFPMLLKEL (167 aa). Residues 212 to 293 enclose the HRDC domain; it reads KADILGRLKA…ENAEALRPEE (82 aa).

The protein belongs to the RNase D family. A divalent metal cation is required as a cofactor.

The protein localises to the cytoplasm. It carries out the reaction Exonucleolytic cleavage that removes extra residues from the 3'-terminus of tRNA to produce 5'-mononucleotides.. In terms of biological role, exonuclease involved in the 3' processing of various precursor tRNAs. Initiates hydrolysis at the 3'-terminus of an RNA molecule and releases 5'-mononucleotides. This Zymomonas mobilis subsp. mobilis (strain ATCC 31821 / ZM4 / CP4) protein is Ribonuclease D.